The chain runs to 876 residues: Beta-glucosidase 1 (876 aa).

A signal peptide spans 1–17 (MLMIVQLLVFALGLAVA). 4 N-linked (GlcNAc...) asparagine glycosylation sites follow: Asn22, Asn75, Asn224, and Asn267. Asp295 is a catalytic residue. N-linked (GlcNAc...) asparagine glycosylation is found at Asn332, Asn339, Asn372, Asn389, Asn426, Asn544, Asn585, Asn739, Asn780, and Asn790.

Belongs to the glycosyl hydrolase 3 family.

The enzyme catalyses Hydrolysis of terminal, non-reducing beta-D-glucosyl residues with release of beta-D-glucose.. The protein operates within glycan metabolism; cellulose degradation. In Saccharomycopsis fibuligera (Yeast), this protein is Beta-glucosidase 1 (BGL1).